Here is a 172-residue protein sequence, read N- to C-terminus: Acetolactate synthase small subunit (172 aa).

The ACT domain occupies 4–78 (TLSVLVEDEA…NVIKVQDITE (75 aa)).

It belongs to the acetolactate synthase small subunit family. As to quaternary structure, dimer of large and small chains.

The catalysed reaction is 2 pyruvate + H(+) = (2S)-2-acetolactate + CO2. It functions in the pathway amino-acid biosynthesis; L-isoleucine biosynthesis; L-isoleucine from 2-oxobutanoate: step 1/4. The protein operates within amino-acid biosynthesis; L-valine biosynthesis; L-valine from pyruvate: step 1/4. This Synechocystis sp. (strain ATCC 27184 / PCC 6803 / Kazusa) protein is Acetolactate synthase small subunit (ilvH).